Reading from the N-terminus, the 135-residue chain is Large ribosomal subunit protein uL22c (135 aa).

It belongs to the universal ribosomal protein uL22 family. As to quaternary structure, part of the 50S ribosomal subunit.

The protein localises to the plastid. In terms of biological role, this protein binds specifically to 23S rRNA. Functionally, the globular domain of the protein is located near the polypeptide exit tunnel on the outside of the subunit, while an extended beta-hairpin is found that lines the wall of the exit tunnel in the center of the 70S ribosome. The sequence is that of Large ribosomal subunit protein uL22c (rpl22) from Cuscuta exaltata (Tall dodder).